The sequence spans 131 residues: Methylglyoxal synthase (131 aa).

The 131-residue stretch at 1–131 (MKIALIAHDK…GDLDYRKFRK (131 aa)) folds into the MGS-like domain. Residues His8, Lys12, 34 to 37 (TGTT), and 54 to 55 (SG) contribute to the substrate site. The active-site Proton donor/acceptor is the Asp60. His87 provides a ligand contact to substrate.

The protein belongs to the methylglyoxal synthase family.

The enzyme catalyses dihydroxyacetone phosphate = methylglyoxal + phosphate. Catalyzes the formation of methylglyoxal from dihydroxyacetone phosphate. The polypeptide is Methylglyoxal synthase (Bacillus cytotoxicus (strain DSM 22905 / CIP 110041 / 391-98 / NVH 391-98)).